Consider the following 90-residue polypeptide: Probable Fe(2+)-trafficking protein (90 aa).

This sequence belongs to the Fe(2+)-trafficking protein family.

In terms of biological role, could be a mediator in iron transactions between iron acquisition and iron-requiring processes, such as synthesis and/or repair of Fe-S clusters in biosynthetic enzymes. The polypeptide is Probable Fe(2+)-trafficking protein (Aeromonas hydrophila subsp. hydrophila (strain ATCC 7966 / DSM 30187 / BCRC 13018 / CCUG 14551 / JCM 1027 / KCTC 2358 / NCIMB 9240 / NCTC 8049)).